We begin with the raw amino-acid sequence, 146 residues long: Prostaglandin E synthase 3 (146 aa).

Residues 1–76 enclose the CS domain; the sequence is VFIEFCVEDS…ESGQAWPRLT (76 aa). The tract at residues 110–146 is disordered; that stretch reads SEMMNNMGGDDDVDLPEVDGADDDSPDSDDEKMPDLE. Positions 118-139 are enriched in acidic residues; sequence GDDDVDLPEVDGADDDSPDSDD.

It belongs to the p23/wos2 family. In terms of assembly, binds to telomerase. Binds to the progesterone receptor.

The protein resides in the cytoplasm. The enzyme catalyses prostaglandin H2 = prostaglandin E2. The protein operates within lipid metabolism; prostaglandin biosynthesis. Its function is as follows. Molecular chaperone. This Gallus gallus (Chicken) protein is Prostaglandin E synthase 3 (PTGES3).